The chain runs to 46 residues: Escargot/snail protein homolog (46 aa).

3 C2H2-type zinc fingers span residues 1–4 (HIAH), 9–30 (CKCP…IRTH), and 36–46 (SVCQHCNRAFA).

Belongs to the snail C2H2-type zinc-finger protein family.

The protein resides in the nucleus. The polypeptide is Escargot/snail protein homolog (Lithobius forficatus (Centipede)).